A 262-amino-acid polypeptide reads, in one-letter code: Indole-3-glycerol phosphate synthase (262 aa).

Belongs to the TrpC family.

The catalysed reaction is 1-(2-carboxyphenylamino)-1-deoxy-D-ribulose 5-phosphate + H(+) = (1S,2R)-1-C-(indol-3-yl)glycerol 3-phosphate + CO2 + H2O. It participates in amino-acid biosynthesis; L-tryptophan biosynthesis; L-tryptophan from chorismate: step 4/5. The sequence is that of Indole-3-glycerol phosphate synthase from Bordetella pertussis (strain Tohama I / ATCC BAA-589 / NCTC 13251).